A 362-amino-acid polypeptide reads, in one-letter code: Phosphoserine aminotransferase (362 aa).

L-glutamate-binding residues include S9 and R42. Residues 76-77 (GR), W102, T153, D174, and Q197 contribute to the pyridoxal 5'-phosphate site. At K198 the chain carries N6-(pyridoxal phosphate)lysine. Residue 239–240 (NT) participates in pyridoxal 5'-phosphate binding.

This sequence belongs to the class-V pyridoxal-phosphate-dependent aminotransferase family. SerC subfamily. Homodimer. Requires pyridoxal 5'-phosphate as cofactor.

It localises to the cytoplasm. The catalysed reaction is O-phospho-L-serine + 2-oxoglutarate = 3-phosphooxypyruvate + L-glutamate. It catalyses the reaction 4-(phosphooxy)-L-threonine + 2-oxoglutarate = (R)-3-hydroxy-2-oxo-4-phosphooxybutanoate + L-glutamate. The protein operates within amino-acid biosynthesis; L-serine biosynthesis; L-serine from 3-phospho-D-glycerate: step 2/3. Its pathway is cofactor biosynthesis; pyridoxine 5'-phosphate biosynthesis; pyridoxine 5'-phosphate from D-erythrose 4-phosphate: step 3/5. In terms of biological role, catalyzes the reversible conversion of 3-phosphohydroxypyruvate to phosphoserine and of 3-hydroxy-2-oxo-4-phosphonooxybutanoate to phosphohydroxythreonine. Is involved in both pyridoxine and serine biosynthesis. The protein is Phosphoserine aminotransferase (serC) of Escherichia coli (strain K12).